Consider the following 378-residue polypeptide: Probable pectin lyase A (378 aa).

An N-terminal signal peptide occupies residues 1–18 (MKYQGLLAIAGCIASASA). 2 disulfide bridges follow: Cys-81/Cys-100 and Cys-90/Cys-224. A glycan (N-linked (GlcNAc...) asparagine) is linked at Asn-127. Residue Arg-254 is part of the active site. A disulfide bond links Cys-321 and Cys-329.

The protein belongs to the polysaccharide lyase 1 family.

The protein localises to the secreted. It carries out the reaction Eliminative cleavage of (1-&gt;4)-alpha-D-galacturonan methyl ester to give oligosaccharides with 4-deoxy-6-O-methyl-alpha-D-galact-4-enuronosyl groups at their non-reducing ends.. Its function is as follows. Pectinolytic enzymes consist of four classes of enzymes: pectin lyase, polygalacturonase, pectin methylesterase and rhamnogalacturonase. Among pectinolytic enzymes, pectin lyase is the most important in depolymerization of pectin, since it cleaves internal glycosidic bonds of highly methylated pectins. The chain is Probable pectin lyase A (pelA) from Neosartorya fischeri (strain ATCC 1020 / DSM 3700 / CBS 544.65 / FGSC A1164 / JCM 1740 / NRRL 181 / WB 181) (Aspergillus fischerianus).